A 605-amino-acid polypeptide reads, in one-letter code: Hepatocyte nuclear factor 1-alpha-A (605 aa).

The interval 1-31 (MASQLSYLQRELLQALLESGVTKEALKKALA) is dimerization. The region spanning 1–32 (MASQLSYLQRELLQALLESGVTKEALKKALAD) is the HNF-p1 domain. Residues 57–81 (QLPNGLGESHISEDESSDDGEDFTP) are disordered. One can recognise a POU-specific atypical domain in the interval 85–180 (KELERLSPEE…IARLFTFTEF (96 aa)). Interaction with DNA stretches follow at residues 128-130 (QRE), 141-147 (HLSQHLN), 153-156 (KTQK), 206-209 (RFKW), 266-268 (RVY), and 273-276 (NRRK). The short motif at 200 to 208 (KKMRRNRFK) is the Nuclear localization signal element. The segment at residues 202–282 (MRRNRFKWGP…NRRKEEAFRH (81 aa)) is a DNA-binding region (homeobox; HNF1-type). Residues 321–335 (DRSAVMANSQSTPSP) are compositionally biased toward polar residues. Residues 321–343 (DRSAVMANSQSTPSPSALEPSHS) form a disordered region. Positions 448 to 453 (PSHQLH) are not present in other members of the HNF1 family.

This sequence belongs to the HNF1 homeobox family. In terms of assembly, binds DNA as dimer. Forms a homodimer or heterodimer with HNF1-alpha-B. Potentially also form a heterodimer with HNF1-beta. Protein expressed in liver, stomach, small intestine, colon and kidney. Not expressed in spleen, lung, blood, heart muscle, skeletal muscle, testis and brain.

It localises to the nucleus. In terms of biological role, transcriptional activator that regulates the tissue specific expression of multiple genes, especially in pancreas and liver. Binds to the hepatocyte specific promoter element HP1. Binds to the inverted palindrome 5'-GTTAATNATTAAC-3'. The chain is Hepatocyte nuclear factor 1-alpha-A (hnf1a-a) from Xenopus laevis (African clawed frog).